The sequence spans 137 residues: Structural protein A137R (137 aa).

This sequence belongs to the asfivirus A137R family. Interacts with host TBK1.

It is found in the virion. The protein resides in the host cytoplasm. In terms of biological role, plays a role in the inhibition of the host innate immune response. Mechanistically, promotes the autophagy-mediated lysosomal degradation of host TBK1 and affects IRF3 nuclear translocation to block type I IFN production. The sequence is that of Structural protein A137R from African swine fever virus (isolate Warthog/Namibia/Wart80/1980) (ASFV).